Consider the following 61-residue polypeptide: MGRGDTPRHPPSPAAGFGVHRGALLIPVALRVLWAGRTPRPFTPGLADPRRLGPRRVQAAQ.

Residues 39 to 61 (PRPFTPGLADPRRLGPRRVQAAQ) form a disordered region.

This is an uncharacterized protein from Pan troglodytes (Chimpanzee).